Here is a 253-residue protein sequence, read N- to C-terminus: Giant extracellular hemoglobin linker 1 chain (253 aa).

An LDL-receptor class A domain is found at 89–131; the sequence is HHCDDDHLSCKDVAFTCIGHNLVCDGHKDCLNGHDEDEETCSI. Intrachain disulfides connect cysteine 91/cysteine 105, cysteine 98/cysteine 118, and cysteine 112/cysteine 129.

Disulfide-linked dimer of identical chains. A model is proposed for the subunit structure of the Tylorrhynchus hemoglobin, consisting of 216 polypeptide chains, 192 heme-containing chains, and 24 linker chains.

Its function is as follows. Acts as a linker for the assembly of heme-containing chains in the construction of giant hemoglobin. The polypeptide is Giant extracellular hemoglobin linker 1 chain (Tylorrhynchus heterochetus (Japanese palolo worm)).